A 119-amino-acid polypeptide reads, in one-letter code: Large ribosomal subunit protein uL18 (119 aa).

This sequence belongs to the universal ribosomal protein uL18 family. In terms of assembly, part of the 50S ribosomal subunit; part of the 5S rRNA/L5/L18/L25 subcomplex. Contacts the 5S and 23S rRNAs.

In terms of biological role, this is one of the proteins that bind and probably mediate the attachment of the 5S RNA into the large ribosomal subunit, where it forms part of the central protuberance. The polypeptide is Large ribosomal subunit protein uL18 (Clostridium botulinum (strain Alaska E43 / Type E3)).